Consider the following 675-residue polypeptide: DNA ligase (675 aa).

Residues 43 to 47 (DYEYD), 92 to 93 (SM), and Glu122 each bind NAD(+). The active-site N6-AMP-lysine intermediate is Lys124. Arg145, Glu179, Lys295, and Lys319 together coordinate NAD(+). Zn(2+) contacts are provided by Cys413, Cys416, Cys431, and Cys436. The 79-residue stretch at 597-675 (SPDGYYKGKK…ETEAIAKFEQ (79 aa)) folds into the BRCT domain.

It belongs to the NAD-dependent DNA ligase family. LigA subfamily. It depends on Mg(2+) as a cofactor. Mn(2+) is required as a cofactor.

The catalysed reaction is NAD(+) + (deoxyribonucleotide)n-3'-hydroxyl + 5'-phospho-(deoxyribonucleotide)m = (deoxyribonucleotide)n+m + AMP + beta-nicotinamide D-nucleotide.. Functionally, DNA ligase that catalyzes the formation of phosphodiester linkages between 5'-phosphoryl and 3'-hydroxyl groups in double-stranded DNA using NAD as a coenzyme and as the energy source for the reaction. It is essential for DNA replication and repair of damaged DNA. In Pediococcus pentosaceus (strain ATCC 25745 / CCUG 21536 / LMG 10740 / 183-1w), this protein is DNA ligase.